The primary structure comprises 198 residues: MTDFALNAEVRSDLGKGASRRLRRNAAQVPAVIYGGDKEPQSISILAKDITKLIEDEAAFSHVITLNIAGATETVLIKALQRHPSKAAVMHADFLRVVADHKLSAVVPLHFVNAETSVGVKQQGGEVSHVISEVEVSCLPKDLPEFIEVDLAQVEVGQIVHLSNLSVPAGVELVALAHGNDLAVANIHASRVKEEGAE.

The protein belongs to the bacterial ribosomal protein bL25 family. CTC subfamily. Part of the 50S ribosomal subunit; part of the 5S rRNA/L5/L18/L25 subcomplex. Contacts the 5S rRNA. Binds to the 5S rRNA independently of L5 and L18.

In terms of biological role, this is one of the proteins that binds to the 5S RNA in the ribosome where it forms part of the central protuberance. The sequence is that of Large ribosomal subunit protein bL25 from Azotobacter vinelandii (strain DJ / ATCC BAA-1303).